Here is a 309-residue protein sequence, read N- to C-terminus: uncharacterized protein (309 aa).

This is an uncharacterized protein from Aedes vexans (Inland floodwater mosquito).